A 306-amino-acid chain; its full sequence is uncharacterized protein (306 aa).

D204 serves as the catalytic Proton acceptor.

The protein belongs to the aminoglycoside phosphotransferase family.

This is an uncharacterized protein from Bacillus subtilis (strain 168).